Here is a 60-residue protein sequence, read N- to C-terminus: Large ribosomal subunit protein bL32 (60 aa).

It belongs to the bacterial ribosomal protein bL32 family.

The protein is Large ribosomal subunit protein bL32 of Azotobacter vinelandii (strain DJ / ATCC BAA-1303).